A 125-amino-acid polypeptide reads, in one-letter code: MVNSLTFTLVVVCLVRSCDGVAAVSSDMIDSTNNRISRNMIRRVLQETATANDDVKKLSTSTKVDSKLNQEIKTKPDQLVKAEKNSSKIGAWLKRMNVISSKRDKFFILATILLFPIAAYMVASR.

A signal peptide spans 1–23 (MVNSLTFTLVVVCLVRSCDGVAA). The RxLR-dEER signature appears at 43–73 (RVLQETATANDDVKKLSTSTKVDSKLNQEIK). Asn85 carries N-linked (GlcNAc...) asparagine glycosylation. The helical transmembrane segment at 106-123 (FFILATILLFPIAAYMVA) threads the bilayer.

Belongs to the RxLR effector family.

The protein localises to the secreted. It is found in the host endoplasmic reticulum membrane. Its function is as follows. Secreted effector that does not suppress pattern-triggered immunity (PTI) in plant host. The chain is Secreted RxLR effector protein RXLR-C13 from Plasmopara halstedii (Downy mildew of sunflower).